The following is a 644-amino-acid chain: MIRIRFGMDVLLVVLLATCLLTPAHGTPLEWDFAVTLRTKIQFMDSSWQTIATAAHEFDELSALTFDESEELIYFNDLKHRNGSIFSLKRDLIAANHVAEQTIARTGNESVGGLAYDPLNMNLFWSDTEQRKIFFAPIHGSVTPKVLVDLSAEGGRPDGVAVDVCRRKLYWTNSNVTHPTVERINLDGSNRTVIINSDIDMPRGIVVDQLSDRLFWIDDLKGVFFSVESCKLDGSDRQVVLKDKHHEPLNLAVTNDAIYWTDRTTRAVWSHPKVPVIKVTTTSKPEEEDSTDSTDFKDPEPVAEDCPLVRVANLSEEARGIVVRTGFYQRLQKDHHCASIVRKVKERVVEQNRKFEIRSMLDQKIKVLEDERCMNGGEYRAATDLCICPTGFKGSRCEIRECHNYCVHGTCQMSELAYPKCYCQPGFTGERCELSVCSGLCLNGGHCRVSKDENEAPSCECPAKFGGARCEQNSTEICSLFCRLLKHEPEMYVPFGCHSICEELAQDNSTNIAVPQYEHLEVCLTPRVWTSSVIIILVVGIVSSLLLVAVIVHGIRRLYKPKRPRIRKTFVVRKQARTNSAGDTPLTNRPLATEQCEITIENCCNMNICETPCFDPKLVEQTLSKSSCKEDKKILIHNMEDDLY.

The N-terminal stretch at 1-26 is a signal peptide; it reads MIRIRFGMDVLLVVLLATCLLTPAHG. Residues 27–531 lie on the Extracellular side of the membrane; sequence TPLEWDFAVT…VCLTPRVWTS (505 aa). N-linked (GlcNAc...) asparagine glycans are attached at residues Asn-82 and Asn-108. LDL-receptor class B repeat units follow at residues 121 to 166, 167 to 211, and 212 to 257; these read MNLF…DVCR, RKLY…DQLS, and DRLF…TNDA. 2 N-linked (GlcNAc...) asparagine glycosylation sites follow: Asn-175 and Asn-190. The N-linked (GlcNAc...) asparagine glycan is linked to Asn-313. EGF-like domains follow at residues 398–430 and 433–471; these read EIRECHNYCVHGTCQMSELAYPKCYCQPGFTGE and ELSVCSGLCLNGGHCRVSKDENEAPSCECPAKFGGARCE. Intrachain disulfides connect Cys-402–Cys-411, Cys-406–Cys-421, Cys-437–Cys-447, Cys-441–Cys-459, and Cys-461–Cys-470. Residues Asn-473 and Asn-508 are each glycosylated (N-linked (GlcNAc...) asparagine). Residues 532–552 traverse the membrane as a helical segment; it reads SVIIILVVGIVSSLLLVAVIV. At 553 to 644 the chain is on the cytoplasmic side; that stretch reads HGIRRLYKPK…LIHNMEDDLY (92 aa).

The protein belongs to the cueball family.

Its subcellular location is the cell membrane. In terms of biological role, has a role in spermatogenesis and oogenesis. This is Protein cueball from Drosophila simulans (Fruit fly).